Here is a 498-residue protein sequence, read N- to C-terminus: Phosphonates import ATP-binding protein PhnC (498 aa).

The interval 1–27 is disordered; that stretch reads MPQRPEAARAGPVAGPDAASKPAPGPA. Positions 28–269 constitute an ABC transporter domain; it reads LTLRGAGRAY…DLGELYEARR (242 aa). 60–67 serves as a coordination point for ATP; sequence GPSGAGKS. Residues 270–498 are lysR substrate binding domain; the sequence is GAADPARAPA…LEVARAEVPP (229 aa).

This sequence belongs to the ABC transporter superfamily. Phosphonates importer (TC 3.A.1.9.1) family. In terms of assembly, the complex is composed of two ATP-binding proteins (PhnC), two transmembrane proteins (PhnE) and a solute-binding protein (PhnD).

Its subcellular location is the cell inner membrane. It catalyses the reaction phosphonate(out) + ATP + H2O = phosphonate(in) + ADP + phosphate + H(+). In terms of biological role, part of the ABC transporter complex PhnCDE involved in phosphonates import. Responsible for energy coupling to the transport system. The protein is Phosphonates import ATP-binding protein PhnC of Anaeromyxobacter dehalogenans (strain 2CP-C).